We begin with the raw amino-acid sequence, 405 residues long: Patatin-like protein 2 (405 aa).

The PNPLA domain occupies 24–230 (LSIDGGGVRG…AANNPTLCAM (207 aa)). The GXGXXG motif lies at 28 to 33 (GGGVRG). Positions 66–70 (GTSTG) match the GXSXG motif. The active-site Nucleophile is serine 68. The active-site Proton acceptor is aspartate 217. Positions 217-219 (DGG) match the DGA/G motif.

It belongs to the patatin family.

Functionally, possesses non-specific lipolytic acyl hydrolase (LAH) activity. Hydrolyzes phospholipids as well as galactolipids. May play a role in disease resistance. The chain is Patatin-like protein 2 (PLP2) from Oryza sativa subsp. indica (Rice).